The sequence spans 249 residues: Ditrans,polycis-undecaprenyl-diphosphate synthase ((2E,6E)-farnesyl-diphosphate specific) (249 aa).

Residue Asp-26 is part of the active site. Asp-26 provides a ligand contact to Mg(2+). Residues 27–30, Trp-31, Arg-39, His-43, and 71–73 contribute to the substrate site; these read GNGR and SRE. The Proton acceptor role is filled by Asn-74. Residues Trp-75, Arg-77, Arg-194, and 200–202 each bind substrate; that span reads RIS. Glu-213 is a binding site for Mg(2+).

Belongs to the UPP synthase family. In terms of assembly, homodimer. Mg(2+) is required as a cofactor.

The enzyme catalyses 8 isopentenyl diphosphate + (2E,6E)-farnesyl diphosphate = di-trans,octa-cis-undecaprenyl diphosphate + 8 diphosphate. Its function is as follows. Catalyzes the sequential condensation of isopentenyl diphosphate (IPP) with (2E,6E)-farnesyl diphosphate (E,E-FPP) to yield (2Z,6Z,10Z,14Z,18Z,22Z,26Z,30Z,34E,38E)-undecaprenyl diphosphate (di-trans,octa-cis-UPP). UPP is the precursor of glycosyl carrier lipid in the biosynthesis of bacterial cell wall polysaccharide components such as peptidoglycan and lipopolysaccharide. In Buchnera aphidicola subsp. Schizaphis graminum (strain Sg), this protein is Ditrans,polycis-undecaprenyl-diphosphate synthase ((2E,6E)-farnesyl-diphosphate specific).